Here is a 1211-residue protein sequence, read N- to C-terminus: MEPPQKKILKVFDQDGLYKTMVIEPSSTTGEICEKFAKKLFLEDSEVVQFSLFIFEGGVRHQLKNTDFPFDYLIKYEKKDYKFFFLNPNGEFISFDKDKQVKKSQSASTSGSAPPKKEPPKPQELQQKQHISKGKSGWLLRKRPGRYDKLYSVSKADKYLRLYENEDTDNDPLYELSLENSIIELKQDLHLQLTLGNSERYIFTHESESEIVSWAQELQATMNYTPGSSSSGSKTNIIKNSSPMGGMLMGGGGGGGGYIPSTKDLGVKLQSKAENTTTLVSTLIQWVNHILEGKGIKVEETEVLSAFSDGIVFINLIEDLFNQTISYRKGKSVYEMQSNIDKCLDVLKTKCGCDYGKILSSDVSECKVAKIIVRILWSMFVGYFCNCEGKEFNMRDKLISWCSTIVLQESSKQIIVESPSSLRNPMVFAVLVNKFAGSTTLDFNALQKIKSKQDQAQQIIEAAFNYLSIPMVVDSSFWNDDQLDEKSFLIYLSFYYIYLSGQEEEKSKFLQSCINPRPSVEPEQTISIRDKQLKLMREKKEEEDRLKKEKEEKEKEEKEKLEKESSAAAAATSSIASTANSNSTEPPKPTTVPLKKTISKLPPRKLPPTVSSPTTTTTTTVPTTVPTTVTTTTTTTSPTTSPTLTPKQPIGTTIKKPATAPLKLKPVAKPLPQPTPSSSTSTTTTPTTTPSSPKPTPVPRTPQLEKEKQDRLEKARLEKEKAEKEEQEFLKQQQEEEEEEQRLLLEQQKQQQEGQERLRKEEEEQQQQRELEEKQRQIDEEEAEEEARIRELEEEARKSKERLEKARLDKLAKAQKEREDKEREEKEKKEKEERERKERKHDENDMDTFKLLEDIVSSSSSPTITPPQSLHSSQIIRTTIEEDDQTNSELEMFQNEYNRLQDEEEHINSFLKLGSSGSNNSNNNNNNNNNKSGASSVTESVTTNKHKSIDILSDNSSVLSSLDDIINSIDKKTSATTSDSFNLSTSSTSLSFLPSSPDLSTNSTFTTNNNNDDETKARSLTSKARKPLPTLTKEQQSIIDKQTGLVSKQSTNNESNEQQQQQQQQQQLQQQQSSQNSTTSISTVNPSNLSINNEEKEKESEPHKPPPKNTQGRVVVRICLEGFGDVLFCSFAIGYDTLCGTVRDMVIKKMKVSSTEEFEYSLHIVRDGLERVLDDDEILLEAEDKIDRFVFKKNDIDRRLLISNHRPVSSK.

One can recognise a Ras-associating 1 domain in the interval 5-90 (QKKILKVFDQ…YKFFFLNPNG (86 aa)). Positions 103–112 (KSQSASTSGS) are enriched in polar residues. Residues 103–133 (KSQSASTSGSAPPKKEPPKPQELQQKQHISK) form a disordered region. In terms of domain architecture, PH spans 132–223 (SKGKSGWLLR…WAQELQATMN (92 aa)). Calponin-homology (CH) domains follow at residues 277-384 (TTLV…VGYF) and 392-502 (FNMR…LSGQ). 2 disordered regions span residues 520-941 (VEPE…TESV) and 973-1110 (TSAT…PKNT). A coiled-coil region spans residues 527 to 572 (SIRDKQLKLMREKKEEEDRLKKEKEEKEKEEKEKLEKESSAAAAAT). The span at 528-565 (IRDKQLKLMREKKEEEDRLKKEKEEKEKEEKEKLEKES) shows a compositional bias: basic and acidic residues. Composition is skewed to low complexity over residues 566-596 (SAAA…PLKK), 607-646 (PPTV…TLTP), 655-668 (KKPA…KPVA), and 676-691 (PSSS…TTPS). Over residues 703–729 (QLEKEKQDRLEKARLEKEKAEKEEQEF) the composition is skewed to basic and acidic residues. A coiled-coil region spans residues 703 to 847 (QLEKEKQDRL…ERKHDENDMD (145 aa)). The span at 744-753 (LLEQQKQQQE) shows a compositional bias: low complexity. Basic and acidic residues-rich tracts occupy residues 754 to 778 (GQER…QRQI) and 786 to 853 (EARI…KLLE). Polar residues predominate over residues 862 to 877 (PTITPPQSLHSSQIIR). The stretch at 880 to 909 (IEEDDQTNSELEMFQNEYNRLQDEEEHINS) forms a coiled coil. 2 stretches are compositionally biased toward low complexity: residues 914–936 (GSSG…GASS) and 976–1010 (TTSD…TNNN). A compositionally biased stretch (polar residues) spans 1032–1048 (TKEQQSIIDKQTGLVSK). The stretch at 1048–1076 (KQSTNNESNEQQQQQQQQQQLQQQQSSQN) forms a coiled coil. The segment covering 1049 to 1083 (QSTNNESNEQQQQQQQQQQLQQQQSSQNSTTSIST) has biased composition (low complexity). Basic and acidic residues predominate over residues 1093-1104 (NEEKEKESEPHK). In terms of domain architecture, Ras-associating 2 spans 1112–1196 (GRVVVRICLE…DRFVFKKNDI (85 aa)).

This is PH domain-containing protein DDB_G0287875 from Dictyostelium discoideum (Social amoeba).